A 71-amino-acid chain; its full sequence is uncharacterized protein (71 aa).

This is an uncharacterized protein from Bacillus phage SPP1 (Bacteriophage SPP1).